A 412-amino-acid polypeptide reads, in one-letter code: Serine hydroxymethyltransferase (412 aa).

Residues Leu-117 and 121–123 contribute to the (6S)-5,6,7,8-tetrahydrofolate site; that span reads GHL. Residue Lys-226 is modified to N6-(pyridoxal phosphate)lysine.

The protein belongs to the SHMT family. Homodimer. Pyridoxal 5'-phosphate is required as a cofactor.

It localises to the cytoplasm. It catalyses the reaction (6R)-5,10-methylene-5,6,7,8-tetrahydrofolate + glycine + H2O = (6S)-5,6,7,8-tetrahydrofolate + L-serine. It participates in one-carbon metabolism; tetrahydrofolate interconversion. Its pathway is amino-acid biosynthesis; glycine biosynthesis; glycine from L-serine: step 1/1. Catalyzes the reversible interconversion of serine and glycine with tetrahydrofolate (THF) serving as the one-carbon carrier. This reaction serves as the major source of one-carbon groups required for the biosynthesis of purines, thymidylate, methionine, and other important biomolecules. Also exhibits THF-independent aldolase activity toward beta-hydroxyamino acids, producing glycine and aldehydes, via a retro-aldol mechanism. This chain is Serine hydroxymethyltransferase, found in Staphylococcus saprophyticus subsp. saprophyticus (strain ATCC 15305 / DSM 20229 / NCIMB 8711 / NCTC 7292 / S-41).